We begin with the raw amino-acid sequence, 365 residues long: tRNA/tmRNA (uracil-C(5))-methyltransferase (365 aa).

Glutamine 189, tyrosine 217, asparagine 222, glutamate 238, and aspartate 298 together coordinate S-adenosyl-L-methionine. Catalysis depends on cysteine 323, which acts as the Nucleophile. Residue glutamate 357 is the Proton acceptor of the active site.

Belongs to the class I-like SAM-binding methyltransferase superfamily. RNA M5U methyltransferase family. TrmA subfamily.

It catalyses the reaction uridine(54) in tRNA + S-adenosyl-L-methionine = 5-methyluridine(54) in tRNA + S-adenosyl-L-homocysteine + H(+). The catalysed reaction is uridine(341) in tmRNA + S-adenosyl-L-methionine = 5-methyluridine(341) in tmRNA + S-adenosyl-L-homocysteine + H(+). Dual-specificity methyltransferase that catalyzes the formation of 5-methyluridine at position 54 (m5U54) in all tRNAs, and that of position 341 (m5U341) in tmRNA (transfer-mRNA). This chain is tRNA/tmRNA (uracil-C(5))-methyltransferase, found in Proteus mirabilis (strain HI4320).